We begin with the raw amino-acid sequence, 354 residues long: MTAAIRRQRELSILPKVTLEAMNTTVMQGFNRSERCPRDTRIVQLVFPALYTVVFLTGILLNTLALWVFVHIPSSSTFIIYLKNTLVADLIMTLMLPFKILSDSHLAPWQLRAFVCRFSSVIFYETMYVGIVLLGLIAFDRFLKIIRPLRNIFLKKPVFAKTVSIFIWFFLFFISLPNTILSNKEATPSSVKKCASLKGPLGLKWHQMVNNICQFIFWTVFILMLVFYVVIAKKVYDSYRKSKSKDRKNNKKLEGKVFVVVAVFFVCFAPFHFARVPYTHSQTNNKTDCRLQNQLFIAKETTLFLAATNICMDPLIYIFLCKKFTEKLPCMQGRKTTASSQENHSSQTDNITLG.

Over 1–49 (MTAAIRRQRELSILPKVTLEAMNTTVMQGFNRSERCPRDTRIVQLVFPA) the chain is Extracellular. N-linked (GlcNAc...) asparagine glycans are attached at residues Asn23 and Asn31. The chain crosses the membrane as a helical span at residues 50-70 (LYTVVFLTGILLNTLALWVFV). The Cytoplasmic portion of the chain corresponds to 71-77 (HIPSSST). A helical transmembrane segment spans residues 78-98 (FIIYLKNTLVADLIMTLMLPF). Topologically, residues 99 to 117 (KILSDSHLAPWQLRAFVCR) are extracellular. The cysteines at positions 116 and 194 are disulfide-linked. The chain crosses the membrane as a helical span at residues 118-138 (FSSVIFYETMYVGIVLLGLIA). Residues 139–161 (FDRFLKIIRPLRNIFLKKPVFAK) lie on the Cytoplasmic side of the membrane. A helical transmembrane segment spans residues 162–182 (TVSIFIWFFLFFISLPNTILS). At 183–211 (NKEATPSSVKKCASLKGPLGLKWHQMVNN) the chain is on the extracellular side. A helical transmembrane segment spans residues 212–232 (ICQFIFWTVFILMLVFYVVIA). The Cytoplasmic segment spans residues 233–252 (KKVYDSYRKSKSKDRKNNKK). A helical transmembrane segment spans residues 253–273 (LEGKVFVVVAVFFVCFAPFHF). The Extracellular portion of the chain corresponds to 274-300 (ARVPYTHSQTNNKTDCRLQNQLFIAKE). N-linked (GlcNAc...) asparagine glycosylation occurs at Asn285. A helical transmembrane segment spans residues 301 to 321 (TTLFLAATNICMDPLIYIFLC). Topologically, residues 322-333 (KKFTEKLPCMQG) are cytoplasmic. A disordered region spans residues 335-354 (KTTASSQENHSSQTDNITLG).

This sequence belongs to the G-protein coupled receptor 1 family. In terms of tissue distribution, strong expression in spleen and adult brain. Lower expression in placenta, lung, liver, spinal cord, thymus, small intestine, uterus, stomach, testis, fetal brain, and adrenal gland. Not detected in pancreas, heart, kidney, skeletal muscle, ovary or fetal aorta. Clearly detected in lymph node and bone marrow, weakly detected in peripheral blood mononuclear cells (PBMC) and in peripheral blood leukocytes (PBL), but not detected in polymorphonuclear cells (PMN). In the brain, detected in all brain regions examined.

It localises to the cell membrane. Receptor for ADP. Coupled to G(i)-proteins. May play a role in hematopoiesis and the immune system. This Homo sapiens (Human) protein is P2Y purinoceptor 13 (P2RY13).